Consider the following 427-residue polypeptide: Galactose-3-O-sulfotransferase 3 (427 aa).

Topologically, residues 1–19 (MPPIFQRLQQATKMSRRKI) are cytoplasmic. A helical; Signal-anchor for type II membrane protein transmembrane segment spans residues 20–40 (LLLVLGCSTLSLLIHQGAQLS). Residues 41–427 (WYPKLFPLSC…RPIRALRPGH (387 aa)) are Lumenal-facing. Residues Asn90, Asn109, Asn176, and Asn301 are each glycosylated (N-linked (GlcNAc...) asparagine). A disordered region spans residues 404-427 (MRLRPEPVLDNPPPRPIRALRPGH).

This sequence belongs to the galactose-3-O-sulfotransferase family. It depends on Mg(2+) as a cofactor.

The protein resides in the golgi apparatus. Its subcellular location is the golgi stack membrane. It functions in the pathway protein modification; carbohydrate sulfation. Its function is as follows. Transfers a sulfate to position 3 of non-reducing beta-galactosyl residues in N-glycans and core2-branched O-glycans. Has high activity towards Gal-beta-1,4-GlcNAc, Gal-beta-1,4(Fuc-alpha-1,3)GlcNAc and lower activity towards Gal-beta-1,3(Fuc-alpha-1,4)GlcNAc. The protein is Galactose-3-O-sulfotransferase 3 (GAL3ST3) of Bos taurus (Bovine).